Here is a 544-residue protein sequence, read N- to C-terminus: Chaperonin GroEL (544 aa).

Residues 30–33 (TLGP), 87–91 (DGTTT), Gly414, 478–480 (NAL), and Asp494 each bind ATP.

The protein belongs to the chaperonin (HSP60) family. As to quaternary structure, forms a cylinder of 14 subunits composed of two heptameric rings stacked back-to-back. Interacts with the co-chaperonin GroES.

It localises to the cytoplasm. The enzyme catalyses ATP + H2O + a folded polypeptide = ADP + phosphate + an unfolded polypeptide.. In terms of biological role, together with its co-chaperonin GroES, plays an essential role in assisting protein folding. The GroEL-GroES system forms a nano-cage that allows encapsulation of the non-native substrate proteins and provides a physical environment optimized to promote and accelerate protein folding. In Pelotomaculum thermopropionicum (strain DSM 13744 / JCM 10971 / SI), this protein is Chaperonin GroEL.